A 297-amino-acid chain; its full sequence is Phosphoribosylaminoimidazole-succinocarboxamide synthase (297 aa).

It belongs to the SAICAR synthetase family.

The enzyme catalyses 5-amino-1-(5-phospho-D-ribosyl)imidazole-4-carboxylate + L-aspartate + ATP = (2S)-2-[5-amino-1-(5-phospho-beta-D-ribosyl)imidazole-4-carboxamido]succinate + ADP + phosphate + 2 H(+). The protein operates within purine metabolism; IMP biosynthesis via de novo pathway; 5-amino-1-(5-phospho-D-ribosyl)imidazole-4-carboxamide from 5-amino-1-(5-phospho-D-ribosyl)imidazole-4-carboxylate: step 1/2. The protein is Phosphoribosylaminoimidazole-succinocarboxamide synthase of Corynebacterium glutamicum (strain R).